Consider the following 335-residue polypeptide: Phospho-N-acetylmuramoyl-pentapeptide-transferase (335 aa).

Helical transmembrane passes span 3-23, 53-73, 78-98, 118-138, 143-163, 175-195, 200-220, 226-246, 251-271, and 314-334; these read LTLI…PHFI, GGTV…ILFF, SMGL…IGFL, LSLQ…PSGI, VFGF…FWVV, IDGL…VIAI, YDVL…FIFN, VFMG…ISIA, WTLL…MLQV, and VDAF…AILY.

This sequence belongs to the glycosyltransferase 4 family. MraY subfamily. Mg(2+) serves as cofactor.

It localises to the cell membrane. It catalyses the reaction UDP-N-acetyl-alpha-D-muramoyl-L-alanyl-gamma-D-glutamyl-L-lysyl-D-alanyl-D-alanine + di-trans,octa-cis-undecaprenyl phosphate = Mur2Ac(oyl-L-Ala-gamma-D-Glu-L-Lys-D-Ala-D-Ala)-di-trans,octa-cis-undecaprenyl diphosphate + UMP. It functions in the pathway cell wall biogenesis; peptidoglycan biosynthesis. Functionally, catalyzes the initial step of the lipid cycle reactions in the biosynthesis of the cell wall peptidoglycan: transfers peptidoglycan precursor phospho-MurNAc-pentapeptide from UDP-MurNAc-pentapeptide onto the lipid carrier undecaprenyl phosphate, yielding undecaprenyl-pyrophosphoryl-MurNAc-pentapeptide, known as lipid I. The polypeptide is Phospho-N-acetylmuramoyl-pentapeptide-transferase (Streptococcus uberis (strain ATCC BAA-854 / 0140J)).